We begin with the raw amino-acid sequence, 277 residues long: DNA-binding transcriptional activator MhpR (277 aa).

Positions 12–74 constitute an HTH iclR-type domain; that stretch reads VRGLTRGLML…PSDDSFRLTI (63 aa). The H-T-H motif DNA-binding region spans 34–53; it reads VGLLAELSGLHRTTVRRLLE. The IclR-ED domain maps to 89-262; that stretch reads ISALAAPLLG…AKQIEEGVES (174 aa).

In terms of biological role, activator of the mhpABCDFE operon coding for components of the 3-hydroxyphenylpropionate degradation pathway. The protein is DNA-binding transcriptional activator MhpR (mhpR) of Escherichia coli (strain K12).